A 51-amino-acid polypeptide reads, in one-letter code: Insulin (51 aa).

Intrachain disulfides connect cysteine 7/cysteine 37, cysteine 19/cysteine 50, and cysteine 36/cysteine 41.

It belongs to the insulin family. As to quaternary structure, heterodimer of a B chain and an A chain linked by two disulfide bonds.

The protein resides in the secreted. Insulin decreases blood glucose concentration. It increases cell permeability to monosaccharides, amino acids and fatty acids. It accelerates glycolysis, the pentose phosphate cycle, and glycogen synthesis in liver. This chain is Insulin (INS), found in Meleagris gallopavo (Wild turkey).